A 187-amino-acid chain; its full sequence is UPF0398 protein MW1336 (187 aa).

The protein belongs to the UPF0398 family.

The protein is UPF0398 protein MW1336 of Staphylococcus aureus (strain MW2).